The sequence spans 89 residues: Small ribosomal subunit protein uS15 (89 aa).

The protein belongs to the universal ribosomal protein uS15 family. Part of the 30S ribosomal subunit. Forms a bridge to the 50S subunit in the 70S ribosome, contacting the 23S rRNA.

Functionally, one of the primary rRNA binding proteins, it binds directly to 16S rRNA where it helps nucleate assembly of the platform of the 30S subunit by binding and bridging several RNA helices of the 16S rRNA. Forms an intersubunit bridge (bridge B4) with the 23S rRNA of the 50S subunit in the ribosome. The polypeptide is Small ribosomal subunit protein uS15 (Chlorobium luteolum (strain DSM 273 / BCRC 81028 / 2530) (Pelodictyon luteolum)).